The following is a 950-amino-acid chain: A disintegrin and metalloproteinase with thrombospondin motifs 15 (950 aa).

The signal sequence occupies residues 1 to 18 (MLLLGISILALAWRPAGS). Positions 19 to 212 (SEPEWEVVVP…NRRRSGRAKR (194 aa)) are excised as a propeptide. Asn-141 is a glycosylation site (N-linked (GlcNAc...) asparagine). The tract at residues 144–172 (APEAQRHSQGAHLLQRRGAPVGPSGDPTS) is disordered. Positions 172–179 (SRCGVASG) match the Cysteine switch motif. Cys-174 contacts Zn(2+). In terms of domain architecture, Peptidase M12B spans 218–427 (RYVETLVVAD…GHGDCLLDQP (210 aa)). Disulfide bonds link Cys-293–Cys-345, Cys-322–Cys-327, Cys-339–Cys-422, Cys-377–Cys-406, Cys-448–Cys-470, Cys-459–Cys-480, Cys-465–Cys-499, Cys-493–Cys-504, Cys-528–Cys-565, Cys-532–Cys-570, and Cys-543–Cys-555. Residue His-361 participates in Zn(2+) binding. Residue Glu-362 is part of the active site. Residues His-365 and His-371 each coordinate Zn(2+). Residues 428–515 (SKPITLPEDL…ERHNPNKYRV (88 aa)) enclose the Disintegrin domain. The TSP type-1 1 domain maps to 516–571 (DGSWAKWEPYGSCSRTCGGGVQLARRQCSNPTPANGGKYCEGVRVKYRSCNLEPCP). N-linked (GlcNAc...) asparagine glycosylation is found at Asn-591, Asn-623, and Asn-679. The spacer stretch occupies residues 701–838 (AIPAGASSID…SNQVEQPDNR (138 aa)). The tract at residues 798 to 822 (FYLPKEPREDKSTRPKDPRGSPVLR) is disordered. The span at 802 to 816 (KEPREDKSTRPKDPR) shows a compositional bias: basic and acidic residues. 2 consecutive TSP type-1 domains span residues 839–895 (PPAR…EPCP) and 896–949 (TWEL…VLRP).

Zn(2+) serves as cofactor. The precursor is cleaved by a furin endopeptidase. Post-translationally, glycosylated. Can be O-fucosylated by POFUT2 on a serine or a threonine residue found within the consensus sequence C1-X(2)-(S/T)-C2-G of the TSP type-1 repeat domains where C1 and C2 are the first and second cysteine residue of the repeat, respectively. Fucosylated repeats can then be further glycosylated by the addition of a beta-1,3-glucose residue by the glucosyltransferase, B3GALTL. Fucosylation mediates the efficient secretion of ADAMTS family members. Can be C-glycosylated with one or two mannose molecules on tryptophan residues within the consensus sequence W-X-X-W of the TPRs. Also N-glycosylated. These other glycosylations can also facilitate secretion. In the adult colon, highly expressed in the muscularis externa (inner circular smooth muscle and outer longitudinal smooth muscle), muscularis mucosa, submucosal glands, crypt, villi epithelial cells, goblet cells and lamina propria. Expressed at perimuscular and peritendious areas in the developing limbs.

It is found in the secreted. Its subcellular location is the extracellular space. The protein resides in the extracellular matrix. The protein localises to the cell surface. Functionally, metalloprotease which has proteolytic activity against the proteoglycan VCAN, cleaving it at the 'Glu-1401-|-1402-Ala' site. Cleaves VCAN in the pericellular matrix surrounding myoblasts, facilitating myoblast contact and fusion which is required for skeletal muscle development and regeneration. The sequence is that of A disintegrin and metalloproteinase with thrombospondin motifs 15 (Adamts15) from Mus musculus (Mouse).